Reading from the N-terminus, the 485-residue chain is Amyloid beta A4 precursor protein-binding family B member 1-interacting protein (485 aa).

Residues glutamine 84–phenylalanine 107 are compositionally biased toward polar residues. The interval glutamine 84–alanine 157 is disordered. Residues leucine 125–proline 147 are compositionally biased toward pro residues. The 88-residue stretch at lysine 175–lysine 262 folds into the Ras-associating domain. Residues valine 305–tyrosine 414 enclose the PH domain.

The protein belongs to the MRL family.

The protein resides in the cell membrane. It localises to the cytoplasm. It is found in the cytoskeleton. Functionally, appears to function in the signal transduction from Ras activation to actin cytoskeletal remodeling. The protein is Amyloid beta A4 precursor protein-binding family B member 1-interacting protein (APBB1IP) of Gallus gallus (Chicken).